Consider the following 1008-residue polypeptide: Probable beta-galactosidase B (1008 aa).

Residues 1 to 18 form the signal peptide; that stretch reads MLLQSLFAWALAIGPCIA. 2 N-linked (GlcNAc...) asparagine glycosylation sites follow: N20 and N23. Position 87 (Y87) interacts with substrate. Residue N108 is glycosylated (N-linked (GlcNAc...) asparagine). 4 residues coordinate substrate: N132, A133, E134, and N192. Catalysis depends on E193, which acts as the Proton donor. An N-linked (GlcNAc...) asparagine glycan is attached at N208. A substrate-binding site is contributed by Y262. C268 and C321 are oxidised to a cystine. N269 carries an N-linked (GlcNAc...) asparagine glycan. E305 (nucleophile) is an active-site residue. Residue Y370 coordinates substrate. N453, N594, N624, N681, N703, N782, N788, N816, N826, and N879 each carry an N-linked (GlcNAc...) asparagine glycan.

Belongs to the glycosyl hydrolase 35 family.

The protein localises to the secreted. It carries out the reaction Hydrolysis of terminal non-reducing beta-D-galactose residues in beta-D-galactosides.. In terms of biological role, cleaves beta-linked terminal galactosyl residues from gangliosides, glycoproteins, and glycosaminoglycans. The sequence is that of Probable beta-galactosidase B (lacB) from Sclerotinia sclerotiorum (strain ATCC 18683 / 1980 / Ss-1) (White mold).